The sequence spans 440 residues: GTPase Der (440 aa).

EngA-type G domains lie at 4–168 and 177–352; these read PVVA…PPEK and IKIA…GRHS. Residues 10 to 17, 57 to 61, 120 to 123, 183 to 190, 230 to 234, and 295 to 298 contribute to the GTP site; these read GRPNVGKS, DTGGL, NKVE, DTAGM, and NKWD. A KH-like domain is found at 353–437; sequence MRISTPGLNA…PIRFVLRKKT (85 aa).

Belongs to the TRAFAC class TrmE-Era-EngA-EngB-Septin-like GTPase superfamily. EngA (Der) GTPase family. Associates with the 50S ribosomal subunit.

Functionally, GTPase that plays an essential role in the late steps of ribosome biogenesis. This Pelotomaculum thermopropionicum (strain DSM 13744 / JCM 10971 / SI) protein is GTPase Der.